Consider the following 134-residue polypeptide: ATP synthase epsilon chain, chloroplastic (134 aa).

This sequence belongs to the ATPase epsilon chain family. F-type ATPases have 2 components, CF(1) - the catalytic core - and CF(0) - the membrane proton channel. CF(1) has five subunits: alpha(3), beta(3), gamma(1), delta(1), epsilon(1). CF(0) has three main subunits: a, b and c.

It is found in the plastid. The protein resides in the chloroplast thylakoid membrane. In terms of biological role, produces ATP from ADP in the presence of a proton gradient across the membrane. In Drimys granadensis, this protein is ATP synthase epsilon chain, chloroplastic.